The sequence spans 128 residues: Small ribosomal subunit protein uS12 (128 aa).

Positions 1–29 (MPTINQLIRKGREPKERKSKSPALMGNPQ) are disordered. Asp-89 carries the post-translational modification 3-methylthioaspartic acid. Positions 106–128 (GVEGRRQGRSKYGAKRPKEGGKK) are disordered.

Belongs to the universal ribosomal protein uS12 family. As to quaternary structure, part of the 30S ribosomal subunit. Contacts proteins S8 and S17. May interact with IF1 in the 30S initiation complex.

Functionally, with S4 and S5 plays an important role in translational accuracy. Interacts with and stabilizes bases of the 16S rRNA that are involved in tRNA selection in the A site and with the mRNA backbone. Located at the interface of the 30S and 50S subunits, it traverses the body of the 30S subunit contacting proteins on the other side and probably holding the rRNA structure together. The combined cluster of proteins S8, S12 and S17 appears to hold together the shoulder and platform of the 30S subunit. The sequence is that of Small ribosomal subunit protein uS12 from Dictyoglomus turgidum (strain DSM 6724 / Z-1310).